A 450-amino-acid polypeptide reads, in one-letter code: Tubulin alpha-3 chain (450 aa).

GTP is bound at residue Gln-11. Lys-40 is modified (N6-acetyllysine). 7 residues coordinate GTP: Glu-71, Ser-140, Gly-144, Thr-145, Thr-179, Asn-206, and Asn-228. Glu-71 is a binding site for Mg(2+). Residue Glu-254 is part of the active site.

Belongs to the tubulin family. As to quaternary structure, dimer of alpha and beta chains. A typical microtubule is a hollow water-filled tube with an outer diameter of 25 nm and an inner diameter of 15 nM. Alpha-beta heterodimers associate head-to-tail to form protofilaments running lengthwise along the microtubule wall with the beta-tubulin subunit facing the microtubule plus end conferring a structural polarity. Microtubules usually have 13 protofilaments but different protofilament numbers can be found in some organisms and specialized cells. It depends on Mg(2+) as a cofactor. Undergoes a tyrosination/detyrosination cycle, the cyclic removal and re-addition of a C-terminal tyrosine residue by the enzymes tubulin tyrosine carboxypeptidase (TTCP) and tubulin tyrosine ligase (TTL), respectively. Post-translationally, acetylation of alpha chains at Lys-40 stabilizes microtubules and affects affinity and processivity of microtubule motors. This modification has a role in multiple cellular functions, ranging from cell motility, cell cycle progression or cell differentiation to intracellular trafficking and signaling. During the early stages of oogenesis lky/Alpha-tubulin N-acetyltransferase 2 is the main acetyltransferase responsible for Lys-40 acetylation in germline cells while Atat/alpha-tubulin N-acetyltransferase 1 is the main acetyltransferase responsible for Lys-40 acetylation in somatic cells.

It localises to the cytoplasm. It is found in the cytoskeleton. The enzyme catalyses GTP + H2O = GDP + phosphate + H(+). Its function is as follows. Tubulin is the major constituent of microtubules, a cylinder consisting of laterally associated linear protofilaments composed of alpha- and beta-tubulin heterodimers. Microtubules grow by the addition of GTP-tubulin dimers to the microtubule end, where a stabilizing cap forms. Below the cap, tubulin dimers are in GDP-bound state, owing to GTPase activity of alpha-tubulin. The chain is Tubulin alpha-3 chain (alphaTub84D) from Drosophila melanogaster (Fruit fly).